Here is a 277-residue protein sequence, read N- to C-terminus: Tryptophan synthase alpha chain (277 aa).

Catalysis depends on proton acceptor residues Glu-51 and Glu-62.

Belongs to the TrpA family. In terms of assembly, tetramer of two alpha and two beta chains.

It carries out the reaction (1S,2R)-1-C-(indol-3-yl)glycerol 3-phosphate + L-serine = D-glyceraldehyde 3-phosphate + L-tryptophan + H2O. Its pathway is amino-acid biosynthesis; L-tryptophan biosynthesis; L-tryptophan from chorismate: step 5/5. The alpha subunit is responsible for the aldol cleavage of indoleglycerol phosphate to indole and glyceraldehyde 3-phosphate. The sequence is that of Tryptophan synthase alpha chain from Phenylobacterium zucineum (strain HLK1).